The primary structure comprises 290 residues: 4-hydroxy-3-methylbut-2-enyl diphosphate reductase (290 aa).

Cys-12 is a [4Fe-4S] cluster binding site. Residues His-50 and His-83 each coordinate (2E)-4-hydroxy-3-methylbut-2-enyl diphosphate. Positions 50 and 83 each coordinate dimethylallyl diphosphate. Positions 50 and 83 each coordinate isopentenyl diphosphate. Residue Cys-105 participates in [4Fe-4S] cluster binding. His-133 lines the (2E)-4-hydroxy-3-methylbut-2-enyl diphosphate pocket. His-133 serves as a coordination point for dimethylallyl diphosphate. His-133 is an isopentenyl diphosphate binding site. The active-site Proton donor is Glu-135. (2E)-4-hydroxy-3-methylbut-2-enyl diphosphate is bound at residue Thr-173. [4Fe-4S] cluster is bound at residue Cys-202. (2E)-4-hydroxy-3-methylbut-2-enyl diphosphate-binding residues include Ser-230, Asn-232, and Ser-274. 3 residues coordinate dimethylallyl diphosphate: Ser-230, Asn-232, and Ser-274. Ser-230, Asn-232, and Ser-274 together coordinate isopentenyl diphosphate.

The protein belongs to the IspH family. Requires [4Fe-4S] cluster as cofactor.

It catalyses the reaction isopentenyl diphosphate + 2 oxidized [2Fe-2S]-[ferredoxin] + H2O = (2E)-4-hydroxy-3-methylbut-2-enyl diphosphate + 2 reduced [2Fe-2S]-[ferredoxin] + 2 H(+). The enzyme catalyses dimethylallyl diphosphate + 2 oxidized [2Fe-2S]-[ferredoxin] + H2O = (2E)-4-hydroxy-3-methylbut-2-enyl diphosphate + 2 reduced [2Fe-2S]-[ferredoxin] + 2 H(+). It participates in isoprenoid biosynthesis; dimethylallyl diphosphate biosynthesis; dimethylallyl diphosphate from (2E)-4-hydroxy-3-methylbutenyl diphosphate: step 1/1. Its pathway is isoprenoid biosynthesis; isopentenyl diphosphate biosynthesis via DXP pathway; isopentenyl diphosphate from 1-deoxy-D-xylulose 5-phosphate: step 6/6. In terms of biological role, catalyzes the conversion of 1-hydroxy-2-methyl-2-(E)-butenyl 4-diphosphate (HMBPP) into a mixture of isopentenyl diphosphate (IPP) and dimethylallyl diphosphate (DMAPP). Acts in the terminal step of the DOXP/MEP pathway for isoprenoid precursor biosynthesis. The protein is 4-hydroxy-3-methylbut-2-enyl diphosphate reductase of Nitratidesulfovibrio vulgaris (strain ATCC 29579 / DSM 644 / CCUG 34227 / NCIMB 8303 / VKM B-1760 / Hildenborough) (Desulfovibrio vulgaris).